The sequence spans 219 residues: uncharacterized protein (219 aa).

Helical transmembrane passes span 81-101 and 168-188; these read VVKW…NYLI and PIME…TALV.

The protein resides in the membrane. This is an uncharacterized protein from Saccharomyces cerevisiae (strain ATCC 204508 / S288c) (Baker's yeast).